An 859-amino-acid polypeptide reads, in one-letter code: DNA mismatch repair protein MutS (859 aa).

ATP is bound at residue 618-625 (GPNMGGKS). Residues 803–829 (RDHDVQQNTEQQGTQQNMSFVPSAPSP) form a disordered region. The segment covering 808–819 (QQNTEQQGTQQN) has biased composition (low complexity).

Belongs to the DNA mismatch repair MutS family.

This protein is involved in the repair of mismatches in DNA. It is possible that it carries out the mismatch recognition step. This protein has a weak ATPase activity. The chain is DNA mismatch repair protein MutS from Shewanella pealeana (strain ATCC 700345 / ANG-SQ1).